Here is a 1027-residue protein sequence, read N- to C-terminus: Scavenger receptor cysteine-rich domain-containing protein SCART1 (1027 aa).

Residues 1–19 (MRAALWTLGLGPLLLNLWA) form the signal peptide. Residues 20-906 (VPIGGPGALR…APFRTFWVVS (887 aa)) are Extracellular-facing. Positions 28–128 (LRLAYRHSTC…HAWVVVALCS (101 aa)) constitute an SRCR 1 domain. Disulfide bonds link cysteine 53–cysteine 117, cysteine 66–cysteine 127, and cysteine 97–cysteine 107. Asparagine 94 carries an N-linked (GlcNAc...) asparagine glycan. A glycan (N-linked (GlcNAc...) asparagine) is linked at asparagine 129. 7 consecutive SRCR domains span residues 135 to 227 (LRLV…VVCS), 232 to 326 (ARLV…LRCS), 328 to 428 (FRMV…AVCS), 434 to 534 (LRLR…VVCS), 555 to 656 (LSLH…VFCS), 661 to 761 (LRLR…AGLS), and 786 to 886 (LRVR…VRCW). Cystine bridges form between cysteine 160-cysteine 216, cysteine 171-cysteine 226, cysteine 196-cysteine 206, cysteine 253-cysteine 315, cysteine 266-cysteine 325, and cysteine 297-cysteine 307. An N-linked (GlcNAc...) asparagine glycan is attached at asparagine 332. 7 cysteine pairs are disulfide-bonded: cysteine 353–cysteine 417, cysteine 366–cysteine 427, cysteine 397–cysteine 407, cysteine 472–cysteine 533, cysteine 503–cysteine 513, cysteine 594–cysteine 655, and cysteine 625–cysteine 635. 2 cysteine pairs are disulfide-bonded: cysteine 824–cysteine 885 and cysteine 855–cysteine 865. The helical transmembrane segment at 907–927 (VVLGSLLGLLLLGLMAFLILP) threads the bilayer. The Cytoplasmic portion of the chain corresponds to 928–1027 (RVTQAMQRGL…AAFPLEEMTL (100 aa)).

In terms of tissue distribution, mainly expressed by CD4(+) and CD8(+) T lymphocytes. Also highly expressed in small intestine and colon. Expressed (at protein level) in small intestine, stomach, gall bladder, and placental villi.

Its subcellular location is the membrane. In terms of biological role, may play a role in the immune system, perhaps as a co-receptor on alphabeta and gammadelta T-cells. The chain is Scavenger receptor cysteine-rich domain-containing protein SCART1 from Homo sapiens (Human).